Reading from the N-terminus, the 245-residue chain is Complement C1q subcomponent subunit A (245 aa).

The first 22 residues, 1–22, serve as a signal peptide directing secretion; that stretch reads MEGPRGWLVLCVLAISLASMVT. The span at 27–38 shows a compositional bias: basic and acidic residues; it reads RAPDGKKGEAGR. Residues 27–114 are disordered; the sequence is RAPDGKKGEA…SPGNIKDQPR (88 aa). The 79-residue stretch at 31–109 folds into the Collagen-like domain; sequence GKKGEAGRPG…KGTKGSPGNI (79 aa). Lys-33 bears the 5-hydroxylysine mark. Residue Lys-33 is glycosylated (O-linked (Gal...) hydroxylysine). Pro-39 and Pro-45 each carry 4-hydroxyproline. Lys-48 is modified (5-hydroxylysine). Residue Lys-48 is glycosylated (O-linked (Gal...) hydroxylysine). Pro-54 and Pro-57 each carry 4-hydroxyproline. Lys-67 carries the 5-hydroxylysine modification. The O-linked (Gal...) hydroxylysine glycan is linked to Lys-67. 4-hydroxyproline is present on residues Pro-73, Pro-79, and Pro-85. Lys-100 carries the post-translational modification 5-hydroxylysine. Lys-100 carries an O-linked (Gal...) hydroxylysine glycan. The C1q domain occupies 110–245; sequence KDQPRPAFSA…FSGFLIFPSA (136 aa). Asn-146 carries N-linked (GlcNAc...) asparagine glycosylation. Cys-172 and Cys-190 are oxidised to a cystine. Residue Gln-199 participates in Ca(2+) binding.

In terms of assembly, core component of the complement C1 complex, a calcium-dependent complex composed of 1 molecule of the C1Q subcomplex, 2 molecules of C1R and 2 molecules of C1S. The C1Q subcomplex is composed 18 subunits: 3 chains of C1QA, C1QB, and C1QC trimerize to form 6 collagen-like triple helices connected to six globular ligand-recognition modules (C1q domain). Interacts with CR1 (via Sushi 24 and Sushi 25 domains). Interacts (via C-terminus) with CD33; this interaction activates CD33 inhibitory motifs. As to quaternary structure, (Microbial infection) Interacts with Staphylococcus aureus protein Cna; this interaction results in the inhibition of the classical complement pathway. In terms of processing, O-linked glycans are assumed to be the Glc-Gal disaccharides typically found as secondary modifications of hydroxylated lysines in collagen-like domains.

It localises to the secreted. It is found in the cell surface. The C1Q subcomplex is inhibited by sulfated molecules, such as triterpenoid sulfates, heparan sulfate, or chondroitin sulfates. Its function is as follows. Core component of the complement C1 complex, a multiprotein complex that initiates the classical pathway of the complement system, a cascade of proteins that leads to phagocytosis and breakdown of pathogens and signaling that strengthens the adaptive immune system. The classical complement pathway is initiated by the C1Q subcomplex of the C1 complex, which specifically binds IgG or IgM immunoglobulins complexed with antigens, forming antigen-antibody complexes on the surface of pathogens: C1QA, together with C1QB and C1QC, specifically recognizes and binds the Fc regions of IgG or IgM via its C1q domain. Immunoglobulin-binding activates the proenzyme C1R, which cleaves C1S, initiating the proteolytic cascade of the complement system. The C1Q subcomplex is activated by a hexamer of IgG complexed with antigens, while it is activated by a pentameric IgM. The C1Q subcomplex also recognizes and binds phosphatidylserine exposed on the surface of cells undergoing programmed cell death, possibly promoting activation of the complement system. The chain is Complement C1q subcomponent subunit A from Homo sapiens (Human).